The chain runs to 79 residues: Pyridoxal 5'-phosphate synthase PDX1-like 4 (79 aa).

Belongs to the PdxS/SNZ family.

The protein is Pyridoxal 5'-phosphate synthase PDX1-like 4 (PDX1L4) of Arabidopsis thaliana (Mouse-ear cress).